We begin with the raw amino-acid sequence, 652 residues long: DNA mismatch repair protein MutL (652 aa).

This sequence belongs to the DNA mismatch repair MutL/HexB family.

Functionally, this protein is involved in the repair of mismatches in DNA. It is required for dam-dependent methyl-directed DNA mismatch repair. May act as a 'molecular matchmaker', a protein that promotes the formation of a stable complex between two or more DNA-binding proteins in an ATP-dependent manner without itself being part of a final effector complex. This Neorickettsia sennetsu (strain ATCC VR-367 / Miyayama) (Ehrlichia sennetsu) protein is DNA mismatch repair protein MutL.